The chain runs to 300 residues: Probable low-salt glycan biosynthesis reductase Agl14 (300 aa).

NADH is bound by residues 10–12 (GLL), 46–47 (DI), and 70–72 (AYT). NADPH-binding positions include 11 to 12 (LL), 46 to 47 (DI), 70 to 72 (AYT), Tyr-109, Tyr-135, and Lys-139. Tyr-135 and Lys-139 together coordinate NADH. Tyr-135 serves as the catalytic Proton donor/acceptor.

The protein belongs to the dTDP-4-dehydrorhamnose reductase family.

The protein operates within protein modification; protein glycosylation. It functions in the pathway cell surface structure biogenesis; S-layer biogenesis. Reductase involved in N-glycan biosynthetic pathway that takes place under low-salt conditions (1.75 M instead of 3.4 M). Participates in the formation of the tetrasaccharide present at 'Asn-532' of S-layer glycoprotein Csg, consisting of a sulfated hexose, 2 hexoses and rhamnose. Involved in the addition of final rhamnose (sugar 4) of the tetrasaccharide on the dolichol phosphate carrier. This is Probable low-salt glycan biosynthesis reductase Agl14 (agl14) from Haloferax volcanii (strain ATCC 29605 / DSM 3757 / JCM 8879 / NBRC 14742 / NCIMB 2012 / VKM B-1768 / DS2) (Halobacterium volcanii).